The chain runs to 130 residues: Small ribosomal subunit protein uS9 (130 aa).

Belongs to the universal ribosomal protein uS9 family.

This is Small ribosomal subunit protein uS9 from Bacillus licheniformis (strain ATCC 14580 / DSM 13 / JCM 2505 / CCUG 7422 / NBRC 12200 / NCIMB 9375 / NCTC 10341 / NRRL NRS-1264 / Gibson 46).